The primary structure comprises 475 residues: MGTQHRIKVDVPDRVLYTVGSCVLVIGSIGITGNLLVLYAFYSNKRLRTPANYFIMNLAASDFLMSATQAPICFLNSMHTEWILGDIGCNFYVFCGALFGITSMMTLLAISVDRYCVITKPLQSIKRSSKKRSCIIIAFVWLYSLGWSVCPLFGWSSYIPEGLMISCTWDYVSYSPANRSYTMMLCCFVFFIPLIIIFHCYLFMFLAIRSTGRNVQKLGSTYNRKSNVSQSVKSEWKLAKIAFVAIVVFVLSWSPYACVTLIAWAGYAKTLNPYSKSVPAVIAKASAIYNPIIYAIIHPRYRRTIRSAVPCLRFLIRISPSDLSTSSVNESSFRASMSSRHSFAARNKSSCVSSISAAETTWSDMELEPVEAARKKQQPHRSRSFSKQAEEETGLLLKTQSCNVLTGEKVAVSSISLHDPFERSFGENAPELLLRPSCLRTSSLPFGLNSSSTEENADTSDMEVQEQHQMEASSH.

The Extracellular portion of the chain corresponds to 1–21 (MGTQHRIKVDVPDRVLYTVGS). Residues 22 to 42 (CVLVIGSIGITGNLLVLYAFY) form a helical membrane-spanning segment. The Cytoplasmic segment spans residues 43-53 (SNKRLRTPANY). Residues 54–74 (FIMNLAASDFLMSATQAPICF) traverse the membrane as a helical segment. Topologically, residues 75-90 (LNSMHTEWILGDIGCN) are extracellular. A disulfide bridge links C89 with C167. A helical transmembrane segment spans residues 91 to 111 (FYVFCGALFGITSMMTLLAIS). At 112 to 134 (VDRYCVITKPLQSIKRSSKKRSC) the chain is on the cytoplasmic side. Residues 135–155 (IIIAFVWLYSLGWSVCPLFGW) traverse the membrane as a helical segment. Over 156–187 (SSYIPEGLMISCTWDYVSYSPANRSYTMMLCC) the chain is Extracellular. A glycan (N-linked (GlcNAc...) asparagine) is linked at N178. The helical transmembrane segment at 188–208 (FVFFIPLIIIFHCYLFMFLAI) threads the bilayer. Topologically, residues 209–240 (RSTGRNVQKLGSTYNRKSNVSQSVKSEWKLAK) are cytoplasmic. Residues 241-261 (IAFVAIVVFVLSWSPYACVTL) traverse the membrane as a helical segment. The Extracellular portion of the chain corresponds to 262 to 276 (IAWAGYAKTLNPYSK). The helical transmembrane segment at 277–297 (SVPAVIAKASAIYNPIIYAII) threads the bilayer. Residue K284 is modified to N6-(retinylidene)lysine. The Cytoplasmic segment spans residues 298–475 (HPRYRRTIRS…EQHQMEASSH (178 aa)). Disordered regions lie at residues 370–390 (VEAARKKQQPHRSRSFSKQAE) and 445–475 (PFGLNSSSTEENADTSDMEVQEQHQMEASSH). The span at 375–384 (KKQQPHRSRS) shows a compositional bias: basic residues. A compositionally biased stretch (polar residues) spans 445 to 454 (PFGLNSSSTE). Residues 455-464 (ENADTSDMEV) are compositionally biased toward acidic residues. Basic and acidic residues predominate over residues 465–475 (QEQHQMEASSH).

This sequence belongs to the G-protein coupled receptor 1 family. Opsin subfamily. In terms of tissue distribution, highest level in the lateral eye. Low level in the brain.

Its subcellular location is the cell membrane. Its function is as follows. Photoreceptor implicated in non-image-forming responses to light. May be able to isomerize covalently bound all-trans retinal back to 11-cis retinal. The sequence is that of Melanopsin (OPN4) from Podarcis siculus (Italian wall lizard).